The chain runs to 161 residues: Nucleoside diphosphate kinase (161 aa).

ATP contacts are provided by Lys-13, Phe-61, Arg-89, Thr-95, Arg-106, and Asn-116. His-119 serves as the catalytic Pros-phosphohistidine intermediate.

The protein belongs to the NDK family. Mg(2+) is required as a cofactor.

The protein localises to the cytoplasm. The enzyme catalyses a 2'-deoxyribonucleoside 5'-diphosphate + ATP = a 2'-deoxyribonucleoside 5'-triphosphate + ADP. The catalysed reaction is a ribonucleoside 5'-diphosphate + ATP = a ribonucleoside 5'-triphosphate + ADP. Major role in the synthesis of nucleoside triphosphates other than ATP. The ATP gamma phosphate is transferred to the NDP beta phosphate via a ping-pong mechanism, using a phosphorylated active-site intermediate. The protein is Nucleoside diphosphate kinase of Halobacterium salinarum (strain ATCC 29341 / DSM 671 / R1).